Consider the following 208-residue polypeptide: MARVAVLGGTFDPIHLGHLAAAQGVLHLTGVERVIFLPNRQPPHKQGQPVTPAEHRAAMVRLAIADNPAFGFSDLELRRPGPSYTIETVRALAAEHPDWEPAFIIGLDSLLAIRTWREWETLMQSVDFFAVTRPGHDLAAARRLLAELGPRLSGRVRLLEIPGVAVASADLRRLAAAGYPLRYLVPDPVARYIAEHRLYLRGESHGDG.

Belongs to the NadD family.

It carries out the reaction nicotinate beta-D-ribonucleotide + ATP + H(+) = deamido-NAD(+) + diphosphate. It participates in cofactor biosynthesis; NAD(+) biosynthesis; deamido-NAD(+) from nicotinate D-ribonucleotide: step 1/1. Catalyzes the reversible adenylation of nicotinate mononucleotide (NaMN) to nicotinic acid adenine dinucleotide (NaAD). The protein is Probable nicotinate-nucleotide adenylyltransferase of Symbiobacterium thermophilum (strain DSM 24528 / JCM 14929 / IAM 14863 / T).